A 164-amino-acid polypeptide reads, in one-letter code: Transcription elongation factor GreA (164 aa).

Residues 50-76 adopt a coiled-coil conformation; that stretch reads YHAAREEQGQQEARIRQLQELLNNAKV.

The protein belongs to the GreA/GreB family.

Its function is as follows. Necessary for efficient RNA polymerase transcription elongation past template-encoded arresting sites. The arresting sites in DNA have the property of trapping a certain fraction of elongating RNA polymerases that pass through, resulting in locked ternary complexes. Cleavage of the nascent transcript by cleavage factors such as GreA or GreB allows the resumption of elongation from the new 3'terminus. GreA releases sequences of 2 to 3 nucleotides. The polypeptide is Transcription elongation factor GreA (Mycobacteroides abscessus (strain ATCC 19977 / DSM 44196 / CCUG 20993 / CIP 104536 / JCM 13569 / NCTC 13031 / TMC 1543 / L948) (Mycobacterium abscessus)).